We begin with the raw amino-acid sequence, 180 residues long: Beta-lactoglobulin-1 (180 aa).

Positions 1-18 (MKCLLLALGLALMCGIQA) are cleaved as a signal peptide. Intrachain disulfides connect Cys-84-Cys-178 and Cys-124-Cys-137.

The protein belongs to the calycin superfamily. Lipocalin family. As to quaternary structure, monomer.

Its subcellular location is the secreted. Its function is as follows. Lactoglobulin is the primary component of whey, it binds retinol and is probably involved in the transport of that molecule. This is Beta-lactoglobulin-1 (LGB1) from Equus caballus (Horse).